Reading from the N-terminus, the 243-residue chain is Carboxy-S-adenosyl-L-methionine synthase (243 aa).

S-adenosyl-L-methionine-binding positions include Tyr-39, 64 to 66 (GCS), Asn-132, and Arg-199.

This sequence belongs to the class I-like SAM-binding methyltransferase superfamily. Cx-SAM synthase family. In terms of assembly, homodimer.

It carries out the reaction prephenate + S-adenosyl-L-methionine = carboxy-S-adenosyl-L-methionine + 3-phenylpyruvate + H2O. Catalyzes the conversion of S-adenosyl-L-methionine (SAM) to carboxy-S-adenosyl-L-methionine (Cx-SAM). The protein is Carboxy-S-adenosyl-L-methionine synthase of Alteromonas mediterranea (strain DSM 17117 / CIP 110805 / LMG 28347 / Deep ecotype).